Here is a 269-residue protein sequence, read N- to C-terminus: Shikimate dehydrogenase (NADP(+)) (269 aa).

Residues 22–24 and threonine 68 each bind shikimate; that span reads TLS. The active-site Proton acceptor is the lysine 72. Residues asparagine 93 and aspartate 104 each coordinate shikimate. NADP(+) is bound by residues 128–132, 152–157, and phenylalanine 210; these read GAGGA and NRTKSR. Tyrosine 212 is a shikimate binding site. Glycine 233 is an NADP(+) binding site.

This sequence belongs to the shikimate dehydrogenase family. As to quaternary structure, homodimer.

It carries out the reaction shikimate + NADP(+) = 3-dehydroshikimate + NADPH + H(+). The protein operates within metabolic intermediate biosynthesis; chorismate biosynthesis; chorismate from D-erythrose 4-phosphate and phosphoenolpyruvate: step 4/7. Its function is as follows. Involved in the biosynthesis of the chorismate, which leads to the biosynthesis of aromatic amino acids. Catalyzes the reversible NADPH linked reduction of 3-dehydroshikimate (DHSA) to yield shikimate (SA). The sequence is that of Shikimate dehydrogenase (NADP(+)) from Saccharolobus solfataricus (strain ATCC 35092 / DSM 1617 / JCM 11322 / P2) (Sulfolobus solfataricus).